Reading from the N-terminus, the 263-residue chain is Proteasome subunit alpha type-1 (263 aa).

Met1 is subject to N-acetylmethionine. Ser110 carries the post-translational modification Phosphoserine; alternate. Residue Ser110 is glycosylated (O-linked (GlcNAc) serine; alternate). Lys115 is covalently cross-linked (Glycyl lysine isopeptide (Lys-Gly) (interchain with G-Cter in ubiquitin)). Position 177 is a phosphoserine (Ser177). Lys208 participates in a covalent cross-link: Glycyl lysine isopeptide (Lys-Gly) (interchain with G-Cter in ubiquitin). Positions 232 to 263 are disordered; it reads FLEGLEERPQRKAQPTQPADEPAEKADEPMEH. The span at 253–263 shows a compositional bias: basic and acidic residues; the sequence is PAEKADEPMEH.

It belongs to the peptidase T1A family. The 26S proteasome consists of a 20S proteasome core and two 19S regulatory subunits. The 20S proteasome core is a barrel-shaped complex made of 28 subunits that are arranged in four stacked rings. The two outer rings are each formed by seven alpha subunits, and the two inner rings are formed by seven beta subunits. The proteolytic activity is exerted by three beta-subunits PSMB5, PSMB6 and PSMB7. Interacts with NOTCH3. Interacts with ZFAND1.

It is found in the cytoplasm. Its subcellular location is the nucleus. In terms of biological role, component of the 20S core proteasome complex involved in the proteolytic degradation of most intracellular proteins. This complex plays numerous essential roles within the cell by associating with different regulatory particles. Associated with two 19S regulatory particles, forms the 26S proteasome and thus participates in the ATP-dependent degradation of ubiquitinated proteins. The 26S proteasome plays a key role in the maintenance of protein homeostasis by removing misfolded or damaged proteins that could impair cellular functions, and by removing proteins whose functions are no longer required. Associated with the PA200 or PA28, the 20S proteasome mediates ubiquitin-independent protein degradation. This type of proteolysis is required in several pathways including spermatogenesis (20S-PA200 complex) or generation of a subset of MHC class I-presented antigenic peptides (20S-PA28 complex). The protein is Proteasome subunit alpha type-1 (PSMA1) of Bos taurus (Bovine).